A 313-amino-acid chain; its full sequence is Recombination-promoting nuclease pSLT051 (313 aa).

Belongs to the Rpn/YhgA-like nuclease family.

In terms of biological role, a low activity DNA endonuclease probably yielding 3'-hydroxyl ends. Involved in RecA-independent recombination and horizontal gene transfer. The protein is Recombination-promoting nuclease pSLT051 of Salmonella typhimurium (strain LT2 / SGSC1412 / ATCC 700720).